We begin with the raw amino-acid sequence, 944 residues long: MDKKSFEMVLDEIRKAVLTEYKLKAIEYVHGYFSSEQVVDLLRYFSWAEPQLKAMKALQHKMVAVQPTEVVNILNCFTFSKDKLVALELLASNIIDAQNSRPIEDLFRVNMSEKKRCKRILEQAFKGGCKAPHAMISSCGTIPGNPYPKGRPSRINGIFPGTPLKKDGEECTNEGKGIAARILGPSKPPPSTYNPHKPVPYPIPPCRPHATIAPSAYNNAGLVPLANVIAPPPPPYTPNPVGTENEDLSNPSKPIQNQTFSTPASQLFSPHGSNPSTPAATPVPTASPVKAINHPSASAAATVSGMNLLNTVLPVFPGQVSSAVHTPQPSIPNPTVIRTPSLPTAPVTSIHSTTTTPVPSIFSGLVSLPGPSATPTAATPTPGPTPRSTLGSSEAFASTSAPFTSLPFSTSSSAASTSNPNSASLSSVFAGLPLPLPPTSQGLSNPTPVIAGGSTPSVAGPLGVNSPLLSALKGFLTSNDTNLINSSALSSAVTSGLASLSSLTLQNSDSSASAPNKCYAPSAIPTPQRTSTPGLALFPGLPSPVANSTSTPLTLPVQSPLATAASASTSVPVSCGSSASLLRGPHPGTSDLHISSTPAATTLPVMIKTEPTSPTPSAFKGPSHSGNPSHGTLGLSGTLGRAYTSTSVPISLSACLNPALSGLSSLSTPLNGSNPLSSISLPPHGSSTPIAPVFTALPSFTSLTNNFPLTGNPSLNPSVSLPGSLIATSSTAATSTSLPHPSSTAAVLSGLSASAPVSAAPFPLNLSTAVPSLFSVTQGPLSSSNPSYPGFSVSNTPSVTPALPSFPGLQAPSTVAAVTPLPVAATAPSPAPVLPGFASAFSSNFNSALVAQAGLSSGLQAAGSSVFPGLLSLPGIPGFPQNPSQSSLQELQHNAAAQSALLQQVHSASALESYPAQPDGFPSYPSAPGTPFSLQPSLSQSGWQ.

Met-1 bears the N-acetylmethionine mark. 4 disordered regions span residues 233-285 (PPPY…PVPT), 369-396 (PGPS…SEAF), 608-633 (KTEP…HGTL), and 912-944 (ESYP…SGWQ). A compositionally biased stretch (polar residues) spans 248–274 (LSNPSKPIQNQTFSTPASQLFSPHGSN). A compositionally biased stretch (low complexity) spans 275–285 (PSTPAATPVPT). Over residues 932–944 (FSLQPSLSQSGWQ) the composition is skewed to polar residues.

As to quaternary structure, interacts with TET2 and OGT; this interaction mediates TET2 O-GlcNAcylation and stability by promoting the interaction between OGT and TET2. Interacts with KDM6A. Interacts with TET1. Glycosylated. Interaction with OGT leads to GlcNAcylation.

In terms of biological role, mediates OGT interaction with and O-GlcNAcylation of TET2 to control TET2 stabilization at enhancers and CpG islands (CGIs). The chain is Proline and serine-rich protein 1 from Homo sapiens (Human).